We begin with the raw amino-acid sequence, 94 residues long: Small ribosomal subunit protein uS17 (94 aa).

The protein belongs to the universal ribosomal protein uS17 family. Part of the 30S ribosomal subunit.

Functionally, one of the primary rRNA binding proteins, it binds specifically to the 5'-end of 16S ribosomal RNA. The chain is Small ribosomal subunit protein uS17 from Deinococcus geothermalis (strain DSM 11300 / CIP 105573 / AG-3a).